Reading from the N-terminus, the 273-residue chain is 2,3,4,5-tetrahydropyridine-2,6-dicarboxylate N-succinyltransferase (273 aa).

2 residues coordinate substrate: arginine 104 and aspartate 141.

The protein belongs to the transferase hexapeptide repeat family. Homotrimer.

It is found in the cytoplasm. The enzyme catalyses (S)-2,3,4,5-tetrahydrodipicolinate + succinyl-CoA + H2O = (S)-2-succinylamino-6-oxoheptanedioate + CoA. Its pathway is amino-acid biosynthesis; L-lysine biosynthesis via DAP pathway; LL-2,6-diaminopimelate from (S)-tetrahydrodipicolinate (succinylase route): step 1/3. The chain is 2,3,4,5-tetrahydropyridine-2,6-dicarboxylate N-succinyltransferase from Aromatoleum aromaticum (strain DSM 19018 / LMG 30748 / EbN1) (Azoarcus sp. (strain EbN1)).